The chain runs to 432 residues: Glutamate-1-semialdehyde 2,1-aminomutase (432 aa).

N6-(pyridoxal phosphate)lysine is present on Lys271.

This sequence belongs to the class-III pyridoxal-phosphate-dependent aminotransferase family. HemL subfamily. In terms of assembly, homodimer. Pyridoxal 5'-phosphate is required as a cofactor.

It is found in the cytoplasm. The enzyme catalyses (S)-4-amino-5-oxopentanoate = 5-aminolevulinate. Its pathway is porphyrin-containing compound metabolism; protoporphyrin-IX biosynthesis; 5-aminolevulinate from L-glutamyl-tRNA(Glu): step 2/2. In Protochlamydia amoebophila (strain UWE25), this protein is Glutamate-1-semialdehyde 2,1-aminomutase.